A 392-amino-acid chain; its full sequence is MSKKALLALEDGSFFFGQSLGAEGETFGELVFNTGMTGYQEVLTDPSYTGQIVVMTYPEIGIYGVNDEDVESDGIKVAGFVVYRSVDTPSNWRATMSFPDYLKKYNIVAIEGVDTRALTRKIRVKGAMKGAISTVDLDPDSLVKRVKESPSIVGRDLAGLVSPKEVIVENPEGDFSVVVLDSGVKWGILRDLKRVGAKVMRVPYSVDIDDIKKLNPDGVLISNGPGDPAALLKTIRLIKDLLKEEIPLAGICLGHQLLGLAVGGRTYKMKFGHRGINHPVKDLRTGRVLITTHNHGFAVDPKSFGLPELGSEDQDANVLTKNLQKISVLEGISPQGIKVEITHISLNDGTMEGMRLVDYPAFSVQYHPEASPGPHDAKYFFEEFKRLIKEVR.

Positions 1–174 are CPSase; sequence MSKKALLALE…EVIVENPEGD (174 aa). 3 residues coordinate L-glutamine: S47, G224, and G226. A Glutamine amidotransferase type-1 domain is found at 176-392; it reads SVVVLDSGVK…EFKRLIKEVR (217 aa). The active-site Nucleophile is the C252. Positions 253, 256, 294, 296, and 297 each coordinate L-glutamine. Residues H367 and E369 contribute to the active site.

It belongs to the CarA family. As to quaternary structure, composed of two chains; the small (or glutamine) chain promotes the hydrolysis of glutamine to ammonia, which is used by the large (or ammonia) chain to synthesize carbamoyl phosphate. Tetramer of heterodimers (alpha,beta)4.

The enzyme catalyses hydrogencarbonate + L-glutamine + 2 ATP + H2O = carbamoyl phosphate + L-glutamate + 2 ADP + phosphate + 2 H(+). It carries out the reaction L-glutamine + H2O = L-glutamate + NH4(+). It participates in amino-acid biosynthesis; L-arginine biosynthesis; carbamoyl phosphate from bicarbonate: step 1/1. The protein operates within pyrimidine metabolism; UMP biosynthesis via de novo pathway; (S)-dihydroorotate from bicarbonate: step 1/3. Functionally, small subunit of the glutamine-dependent carbamoyl phosphate synthetase (CPSase). CPSase catalyzes the formation of carbamoyl phosphate from the ammonia moiety of glutamine, carbonate, and phosphate donated by ATP, constituting the first step of 2 biosynthetic pathways, one leading to arginine and/or urea and the other to pyrimidine nucleotides. The small subunit (glutamine amidotransferase) binds and cleaves glutamine to supply the large subunit with the substrate ammonia. The sequence is that of Carbamoyl phosphate synthase small chain from Thermotoga maritima (strain ATCC 43589 / DSM 3109 / JCM 10099 / NBRC 100826 / MSB8).